The primary structure comprises 505 residues: Alpha-internexin (505 aa).

Residues 1–87 (MSFGSEHYLC…SQAAARTNEY (87 aa)) form a head region. Serine 72 carries the post-translational modification Phosphoserine. Positions 88 to 129 (KIIRTNEKEQLQGLNDRFAVFIEKVHQLETQNRALEAELAAL) are coil 1A. Residues 94 to 407 (EKEQLQGLND…KLLEGEETRF (314 aa)) enclose the IF rod domain. A linker 1 region spans residues 130-142 (RQRHAEPSRVGEL). The segment at 143–238 (FQRELRELRA…QVHDEEVAEL (96 aa)) is coil 1B. Serine 219 is subject to Phosphoserine. The linker 2 stretch occupies residues 239 to 262 (LATLQASSQAAAEVDVAVAKPDLT). A coil 2 region spans residues 263-408 (SALREIRAQY…LLEGEETRFS (146 aa)). N6-acetyllysine is present on lysine 290. A phosphoserine mark is found at serine 335, serine 474, and serine 502. The tract at residues 409–505 (TSGLSISGLN…EITTSSSQKM (97 aa)) is tail. Residues 438–505 (KVSSAGLSLK…EITTSSSQKM (68 aa)) are disordered. Over residues 495–505 (EEITTSSSQKM) the composition is skewed to low complexity.

Belongs to the intermediate filament family. In terms of assembly, forms homodimers (in vitro). Forms heterodimers with NEFL, NEFM or NEFH (in vitro). In terms of processing, O-glycosylated. Expressed in the dorsal root ganglion neurons (at protein level).

Its function is as follows. Class-IV neuronal intermediate filament that is able to self-assemble. It is involved in the morphogenesis of neurons. It may form an independent structural network without the involvement of other neurofilaments or it may cooperate with NEFL to form the filamentous backbone to which NEFM and NEFH attach to form the cross-bridges. May also cooperate with the neuronal intermediate filament protein PRPH to form filamentous networks. This Rattus norvegicus (Rat) protein is Alpha-internexin (Ina).